A 202-amino-acid polypeptide reads, in one-letter code: UPF0056 membrane protein CPn_1010/CP_0843/CPj1010/CpB1048 (202 aa).

Transmembrane regions (helical) follow at residues 7 to 27, 39 to 59, 61 to 81, 105 to 125, 137 to 157, and 175 to 195; these read LSLL…FVAL, VILR…TFGR, FFQF…FLLF, PIFF…TALL, IIFT…LCSS, and FGIA…SIAF.

Belongs to the UPF0056 (MarC) family.

Its subcellular location is the cell membrane. This Chlamydia pneumoniae (Chlamydophila pneumoniae) protein is UPF0056 membrane protein CPn_1010/CP_0843/CPj1010/CpB1048.